A 495-amino-acid polypeptide reads, in one-letter code: Major facilitator-type transporter hxnP (495 aa).

The tract at residues 1–24 (MGATATDIEKVPSAGTPDEPKAGE) is disordered. 5 helical membrane-spanning segments follow: residues 36 to 55 (SFVR…MYFF), 84 to 104 (LLIL…NLLI), 123 to 143 (VWGI…LLAI), 145 to 165 (IILG…FTLF), and 177 to 197 (VLQS…FGLF). A glycan (N-linked (GlcNAc...) asparagine) is linked at asparagine 200. A run of 5 helical transmembrane segments spans residues 209–229 (WLFI…FWWL), 282–302 (VITF…PIIV), 314–334 (LWTV…AKSS), 341–361 (SLHI…LASI), and 368–388 (GVSY…TCLV). The N-linked (GlcNAc...) asparagine glycan is linked to asparagine 395. 2 helical membrane-spanning segments follow: residues 404–424 (ANTG…AATF) and 436–456 (LVAT…MGTW).

Belongs to the major facilitator superfamily.

The protein resides in the cell membrane. Its function is as follows. Major facilitator-type transporter, part of the hnx cluster involved in the purine degradation. The nicotinate hydroxylase hnxS accepts nicotinate as a substrate and catalyzes the first step of nicotinate catabolism. The major facilitator-type transporters hxnP and hxnZ are probably involved in the uptake of nicotinate-derived metabolites, and the oxidoreductases hxnT and hxnY in the further metabolism of 6-OH nicotinic acid. This is Major facilitator-type transporter hxnP from Emericella nidulans (strain FGSC A4 / ATCC 38163 / CBS 112.46 / NRRL 194 / M139) (Aspergillus nidulans).